The sequence spans 433 residues: Keratin, type I cytoskeletal 17 (433 aa).

Residues 1–24 (MTTTIRQFTSSSSIKGSSGLGGGS) are disordered. Residues 1–83 (MTTTIRQFTS…GGVDGLLAGG (83 aa)) are head. Ser-12 and Ser-13 each carry phosphoserine. Lys-15 is covalently cross-linked (Glycyl lysine isopeptide (Lys-Gly) (interchain with G-Cter in SUMO1); alternate). A Glycyl lysine isopeptide (Lys-Gly) (interchain with G-Cter in SUMO2); alternate cross-link involves residue Lys-15. Phosphoserine is present on residues Ser-25, Ser-32, Ser-34, and Ser-39. Residue Ser-44 is modified to Phosphoserine; by RPS6KA1. The coil 1A stretch occupies residues 84–120 (EKATMQNLNDRLASYLDKVRALEEANTELEVKIRDWY). The 312-residue stretch at 84-395 (EKATMQNLND…RLLEGEDAHL (312 aa)) folds into the IF rod domain. Residue Thr-110 is modified to Phosphothreonine. Residues 121–138 (QKQAPGPARDYSAYYQTI) are linker 1. The segment at 139–230 (EDLKNKILVA…NHEEEMNALR (92 aa)) is coil 1B. Positions 231–250 (GQVGGEINVEMDAAPGVDLS) are linker 12. Residues 251–392 (RILSEMRDQY…TYRRLLEGED (142 aa)) form a coil 2 region. Lys-278 is covalently cross-linked (Glycyl lysine isopeptide (Lys-Gly) (interchain with G-Cter in SUMO2)). Thr-279 carries the post-translational modification Phosphothreonine. Ser-323 is subject to Phosphoserine. The segment at 393 to 433 (AHLTQYKPKEPVTTRQVRTIVEEVQDGKVISSREQVHQTTR) is tail. Glycyl lysine isopeptide (Lys-Gly) (interchain with G-Cter in SUMO1); alternate cross-links involve residues Lys-399, Lys-401, and Lys-420. Residues Lys-399, Lys-401, and Lys-420 each participate in a glycyl lysine isopeptide (Lys-Gly) (interchain with G-Cter in SUMO2); alternate cross-link.

The protein belongs to the intermediate filament family. As to quaternary structure, heterodimer of a type I and a type II keratin. KRT17 associates with KRT6 isomers (KRT6A or KRT6B). Interacts with TRADD and SFN. Post-translationally, phosphorylation at Ser-44 occurs in a growth- and stress-dependent fashion in skin keratinocytes, it has no effect on filament organization.

Its subcellular location is the cytoplasm. In terms of biological role, type I keratin involved in the formation and maintenance of various skin appendages, specifically in determining shape and orientation of hair. Required for the correct growth of hair follicles, in particular for the persistence of the anagen (growth) state. Modulates the function of TNF-alpha in the specific context of hair cycling. Regulates protein synthesis and epithelial cell growth through binding to the adapter protein SFN and by stimulating Akt/mTOR pathway. Involved in tissue repair. May be a marker of basal cell differentiation in complex epithelia and therefore indicative of a certain type of epithelial 'stem cells'. Acts as a promoter of epithelial proliferation by acting a regulator of immune response in skin: promotes Th1/Th17-dominated immune environment contributing to the development of basaloid skin tumors. May act as an autoantigen in the immunopathogenesis of psoriasis, with certain peptide regions being a major target for autoreactive T-cells and hence causing their proliferation. The sequence is that of Keratin, type I cytoskeletal 17 from Rattus norvegicus (Rat).